Here is a 484-residue protein sequence, read N- to C-terminus: ATP synthase subunit beta (484 aa).

169-176 (GGAGVGKT) contacts ATP.

It belongs to the ATPase alpha/beta chains family. As to quaternary structure, F-type ATPases have 2 components, CF(1) - the catalytic core - and CF(0) - the membrane proton channel. CF(1) has five subunits: alpha(3), beta(3), gamma(1), delta(1), epsilon(1). CF(0) has three main subunits: a(1), b(2) and c(9-12). The alpha and beta chains form an alternating ring which encloses part of the gamma chain. CF(1) is attached to CF(0) by a central stalk formed by the gamma and epsilon chains, while a peripheral stalk is formed by the delta and b chains.

It localises to the cell membrane. It carries out the reaction ATP + H2O + 4 H(+)(in) = ADP + phosphate + 5 H(+)(out). In terms of biological role, produces ATP from ADP in the presence of a proton gradient across the membrane. The catalytic sites are hosted primarily by the beta subunits. This Cutibacterium acnes (strain DSM 16379 / KPA171202) (Propionibacterium acnes) protein is ATP synthase subunit beta.